Here is a 337-residue protein sequence, read N- to C-terminus: GTP 3',8-cyclase (337 aa).

The 227-residue stretch at 17–243 (PFQRQYYYLR…HKSHTDGPAK (227 aa)) folds into the Radical SAM core domain. Arginine 26 is a binding site for GTP. Cysteine 33 and cysteine 37 together coordinate [4Fe-4S] cluster. Residue tyrosine 39 coordinates S-adenosyl-L-methionine. Residue cysteine 40 coordinates [4Fe-4S] cluster. Arginine 76 is a GTP binding site. Glycine 80 serves as a coordination point for S-adenosyl-L-methionine. Residue threonine 107 participates in GTP binding. S-adenosyl-L-methionine is bound at residue serine 131. Lysine 168 serves as a coordination point for GTP. Methionine 202 contributes to the S-adenosyl-L-methionine binding site. [4Fe-4S] cluster is bound by residues cysteine 265 and cysteine 268. GTP is bound at residue 270 to 272 (RLR). Cysteine 282 is a binding site for [4Fe-4S] cluster.

The protein belongs to the radical SAM superfamily. MoaA family. Monomer and homodimer. Requires [4Fe-4S] cluster as cofactor.

It carries out the reaction GTP + AH2 + S-adenosyl-L-methionine = (8S)-3',8-cyclo-7,8-dihydroguanosine 5'-triphosphate + 5'-deoxyadenosine + L-methionine + A + H(+). It participates in cofactor biosynthesis; molybdopterin biosynthesis. Its function is as follows. Catalyzes the cyclization of GTP to (8S)-3',8-cyclo-7,8-dihydroguanosine 5'-triphosphate. In Haemophilus influenzae (strain PittEE), this protein is GTP 3',8-cyclase.